A 406-amino-acid polypeptide reads, in one-letter code: LIM/homeobox protein Lhx1 (406 aa).

LIM zinc-binding domains lie at 4–54 (CAGC…CKND) and 63–117 (CAGC…CKED). Disordered stretches follow at residues 128 to 189 (NSLH…TIKA) and 294 to 372 (DFFP…SAEV). Low complexity predominate over residues 137–148 (SDPSLSPDSQDP). Residues 151 to 167 (DDAKDSESANVSDKEGG) show a composition bias toward basic and acidic residues. At S162 the chain carries Phosphoserine. Positions 180–239 (RRGPRTTIKAKQLETLKAAFAATPKPTRHIREQLAQETGLNMRVIQVWFQNRRSKERRMK) form a DNA-binding region, homeobox. Over residues 315–327 (PSSGPSGTPLGGL) the composition is skewed to low complexity. Positions 352 to 362 (GDSPSPEPSLP) are enriched in pro residues.

Interacts with LDB1 via the tandem LIM domains.

The protein localises to the nucleus. Its function is as follows. Potential transcription factor. May play a role in early mesoderm formation and later in lateral mesoderm differentiation and neurogenesis. This chain is LIM/homeobox protein Lhx1 (Lhx1), found in Mesocricetus auratus (Golden hamster).